The sequence spans 130 residues: Small ribosomal subunit protein uS9 (130 aa).

Residues lysine 99–arginine 130 are disordered. Basic residues predominate over residues lysine 111 to arginine 130.

It belongs to the universal ribosomal protein uS9 family.

This Latilactobacillus sakei subsp. sakei (strain 23K) (Lactobacillus sakei subsp. sakei) protein is Small ribosomal subunit protein uS9.